A 119-amino-acid polypeptide reads, in one-letter code: Large ribosomal subunit protein bL20 (119 aa).

This sequence belongs to the bacterial ribosomal protein bL20 family.

Binds directly to 23S ribosomal RNA and is necessary for the in vitro assembly process of the 50S ribosomal subunit. It is not involved in the protein synthesizing functions of that subunit. In Syntrophus aciditrophicus (strain SB), this protein is Large ribosomal subunit protein bL20.